The primary structure comprises 222 residues: Ribosomal RNA small subunit methyltransferase G (222 aa).

S-adenosyl-L-methionine contacts are provided by residues Gly-85, Leu-90, 108-110, 136-137, and Arg-150; these read DAT and VE.

This sequence belongs to the methyltransferase superfamily. RNA methyltransferase RsmG family.

It localises to the cytoplasm. Functionally, specifically methylates the N7 position of a guanine in 16S rRNA. This Chlorobium phaeobacteroides (strain DSM 266 / SMG 266 / 2430) protein is Ribosomal RNA small subunit methyltransferase G.